We begin with the raw amino-acid sequence, 367 residues long: Anhydro-N-acetylmuramic acid kinase (367 aa).

Residue 11-18 (GTSLDGVD) coordinates ATP.

The protein belongs to the anhydro-N-acetylmuramic acid kinase family.

It carries out the reaction 1,6-anhydro-N-acetyl-beta-muramate + ATP + H2O = N-acetyl-D-muramate 6-phosphate + ADP + H(+). Its pathway is amino-sugar metabolism; 1,6-anhydro-N-acetylmuramate degradation. The protein operates within cell wall biogenesis; peptidoglycan recycling. In terms of biological role, catalyzes the specific phosphorylation of 1,6-anhydro-N-acetylmuramic acid (anhMurNAc) with the simultaneous cleavage of the 1,6-anhydro ring, generating MurNAc-6-P. Is required for the utilization of anhMurNAc either imported from the medium or derived from its own cell wall murein, and thus plays a role in cell wall recycling. In Rhodopseudomonas palustris (strain ATCC BAA-98 / CGA009), this protein is Anhydro-N-acetylmuramic acid kinase.